Reading from the N-terminus, the 854-residue chain is MNTKEINRVLQDTFNKELTEGKKRHIVFWYDEAGEFIEDIDELNLEGVRIWKLTPHNMFATKLEVEKNDVNSNFLIYANMAKPSAREDWLLDVYKYSQEFATDKMTVMMRELGITNDAALRDVFKKYTKFFKSKEREALFKSFSVPEYTEEQIDLVVLASLCKCNIVNLDEVIKALFREQLKETNKYWENIRKFGNEETFWNLVEKTYGYNLQDKSINSLLIFFLLTNVSETLSGDIPKTWQPYISAIPMNAIVFMNQFMNHSADEVIYNELANTVEKQVKVTEHLQSKEIKDYITSDTFCCFDTNIITYITKQLMNAIHDYTSYIEIIAARRKLHWFSVFRNEYEALYQAIQLFQQIYEMGNAITESQPFDLFKAYESKYHNIDTAYRKFYVAFDQIEDKDGFRALRDKVENIYTNVYINDLAIKWSDALEGEQEEYWPIAGLESQHTFYRSFVQPFVNKEERVFVIISDALRYEVAKELSNMLNVERKASTDIVAMQGVLPSYTDLGMATLLPYKSITFNENAEVYVNDYKASSTENRATILSKHYKDSTAIQYKDLAAMNRQQFRDVFSGKKVSYIYHNVIDARGDHAATEHEVFHAVEQTLKDIRSLVDQLINTVSASNIVITADHGFIYNRDTLQASDKVKKDFLNTDIEKRRFIISSESNSIEGTMNFSMDYVLGEGSGKYVKVPRGANRFAVQGTGANYVHGGAMLQEIVVPVIKFKNDRSKSSKNDVRKVEVKLTSLTRKITNSITYLEFFQTEKIEGKKTPLRLKVYFTDEEGNRISNENIIIADSQSSKPEDRTFKEKFVLKSMTYDKTKKYYLVLEDEEEAVENIYEKVAFPIDIAITNDFGF.

Belongs to the alkaline phosphatase superfamily.

Its function is as follows. BREX systems (bacteriophage exclusion) provide immunity against bacteriophage. A core protein of a type 1 BREX system. This system allows phage adsorption but prevents phage DNA replication, without degradation of the phage DNA. Methylation of bacterial DNA by PglX probably guides self/non-self discrimination. When the brxA-brxB-brxC-pglX and pglZ-brxL operons are transformed into a susceptible B.subtilis strain (BEST7003) they confer resistance to bacteriophages SPbeta, SP16, Zeta, phi3T and SP02 and partial protection to phages SP01 and SP82G (these include lytic and temperate phage). They do not protect against phages phi105, rho10 or rho14. Additionally confers a very slight reduction in efficiency of plasmid transformation. The polypeptide is Alkaline phosphatase-like protein PglZ (Bacillus cereus (strain H3081.97)).